The sequence spans 67 residues: UPF0337 protein SP_1805 (67 aa).

The tract at residues 1–30 (MSVEEKLNQAKGSIKEGVGKAIGDEKMEKE) is disordered.

The protein belongs to the UPF0337 (CsbD) family.

The sequence is that of UPF0337 protein SP_1805 from Streptococcus pneumoniae serotype 4 (strain ATCC BAA-334 / TIGR4).